A 519-amino-acid polypeptide reads, in one-letter code: ATP synthase subunit alpha (519 aa).

Position 175-182 (175-182 (GDRQTGKT)) interacts with ATP.

This sequence belongs to the ATPase alpha/beta chains family. As to quaternary structure, F-type ATPases have 2 components, CF(1) - the catalytic core - and CF(0) - the membrane proton channel. CF(1) has five subunits: alpha(3), beta(3), gamma(1), delta(1), epsilon(1). CF(0) has three main subunits: a(1), b(2) and c(9-12). The alpha and beta chains form an alternating ring which encloses part of the gamma chain. CF(1) is attached to CF(0) by a central stalk formed by the gamma and epsilon chains, while a peripheral stalk is formed by the delta and b chains.

The protein resides in the cell inner membrane. It catalyses the reaction ATP + H2O + 4 H(+)(in) = ADP + phosphate + 5 H(+)(out). Produces ATP from ADP in the presence of a proton gradient across the membrane. The alpha chain is a regulatory subunit. The polypeptide is ATP synthase subunit alpha (Acinetobacter baylyi (strain ATCC 33305 / BD413 / ADP1)).